Consider the following 300-residue polypeptide: tRNA dimethylallyltransferase (300 aa).

9–16 (GTTASGKS) lines the ATP pocket. A substrate-binding site is contributed by 11–16 (TASGKS). Positions 34–37 (DSLC) are interaction with substrate tRNA.

The protein belongs to the IPP transferase family. Monomer. The cofactor is Mg(2+).

The catalysed reaction is adenosine(37) in tRNA + dimethylallyl diphosphate = N(6)-dimethylallyladenosine(37) in tRNA + diphosphate. In terms of biological role, catalyzes the transfer of a dimethylallyl group onto the adenine at position 37 in tRNAs that read codons beginning with uridine, leading to the formation of N6-(dimethylallyl)adenosine (i(6)A). This Campylobacter fetus subsp. fetus (strain 82-40) protein is tRNA dimethylallyltransferase.